A 459-amino-acid polypeptide reads, in one-letter code: Glutamate--tRNA ligase 1 (459 aa).

The 'HIGH' region signature appears at 8–18 (PSPTGYIHIGN). Residues 249–253 (GLSKR) carry the 'KMSKS' region motif. Lysine 252 is a binding site for ATP.

Belongs to the class-I aminoacyl-tRNA synthetase family. Glutamate--tRNA ligase type 1 subfamily. In terms of assembly, monomer.

The protein localises to the cytoplasm. It catalyses the reaction tRNA(Glu) + L-glutamate + ATP = L-glutamyl-tRNA(Glu) + AMP + diphosphate. In terms of biological role, catalyzes the attachment of glutamate to tRNA(Glu) in a two-step reaction: glutamate is first activated by ATP to form Glu-AMP and then transferred to the acceptor end of tRNA(Glu). This Bartonella quintana (strain Toulouse) (Rochalimaea quintana) protein is Glutamate--tRNA ligase 1.